The chain runs to 1288 residues: Disease resistance protein RRS1 (1288 aa).

Positions 5-146 (EKDEEFVCIS…EIVRDVYETH (142 aa)) constitute a TIR domain. Residues 25–26 (SH) form an important for interaction with RPS4 region. One can recognise an NB-ARC domain in the interval 170–421 (IGIRCVGIWG…LLEGCGFFPH (252 aa)). An ATP-binding site is contributed by 179-186 (GMPGIGKT). 12 LRR repeats span residues 498–522 (SEEI…AFKN), 535–553 (NPEV…HSLP), 554–575 (NELR…NFDP), 577–598 (HLVE…TKNL), 621–646 (AENL…RLLR), 665–688 (PPNI…TVKP), 697–720 (LTEI…NSSC), 740–764 (LPNM…SIQG), 766–791 (PRFL…SLEI), 792–807 (LNAH…NMAN), 808–829 (LEFL…QGFP), and 830–852 (RNLK…PLSL). Residues 986–1003 (RKFHCWAPWQVVPKVRKD) carry the Nuclear localization signal motif. The segment at residues 1202-1270 (IPAIDEGDLW…YLSEHNHPRP (69 aa)) is a DNA-binding region (WRKY). Residues 1267–1288 (HPRPTKRKALADSTRSTSSSIC) form a disordered region. The segment covering 1279–1288 (STRSTSSSIC) has biased composition (polar residues).

It belongs to the disease resistance TIR-NB-LRR family. Interacts with PopP2, a R.solanacearum type III effector. Interacts with RPS4.

It is found in the nucleus. It localises to the cytoplasm. Its function is as follows. Transcription factor. Interacts specifically with the W box (5'-(T)TGAC[CT]-3'), a frequently occurring elicitor-responsive cis-acting element. Also acts as a disease resistance protein involved in resistance to fungal and bacterial pathogens, including R.solanacearum, P.syringae pv. tomato and C.higginsianum. Heterodimerization with RPS4 is required to form a functional complex to recognize AvrRps4 and PopP2. Contributes to temperature-conditioned RPS4 auto-immunity. The protein is Disease resistance protein RRS1 of Arabidopsis thaliana (Mouse-ear cress).